An 82-amino-acid polypeptide reads, in one-letter code: Small ribosomal subunit protein bS20 (82 aa).

A disordered region spans residues 1–29; it reads MPNIKSAKKDLRRSRAAAVRNRAQRSALR. The span at 16–29 shows a compositional bias: low complexity; it reads AAAVRNRAQRSALR.

The protein belongs to the bacterial ribosomal protein bS20 family.

In terms of biological role, binds directly to 16S ribosomal RNA. The polypeptide is Small ribosomal subunit protein bS20 (Gemmatimonas aurantiaca (strain DSM 14586 / JCM 11422 / NBRC 100505 / T-27)).